Consider the following 321-residue polypeptide: D-alanine--D-alanine ligase (321 aa).

Residues 121–315 form the ATP-grasp domain; the sequence is RSWFLTNNIN…FVNLIEEILK (195 aa). 148 to 199 serves as a coordination point for ATP; sequence IKRPYVIKPFTQGSSIGVEVIFEEDDFNFANYDFPYGDEVIIEKYIKGRELQ. Residues Glu268, Glu282, and Asn284 each coordinate Mg(2+).

This sequence belongs to the D-alanine--D-alanine ligase family. Mg(2+) serves as cofactor. Mn(2+) is required as a cofactor.

It is found in the cytoplasm. It catalyses the reaction 2 D-alanine + ATP = D-alanyl-D-alanine + ADP + phosphate + H(+). It participates in cell wall biogenesis; peptidoglycan biosynthesis. In terms of biological role, cell wall formation. In Rickettsia bellii (strain RML369-C), this protein is D-alanine--D-alanine ligase.